Here is a 1049-residue protein sequence, read N- to C-terminus: Desmoglein-1 (1049 aa).

Residues 1–23 (MDWSFFRVVAMLFIFLVVVEVNS) form the signal peptide. Positions 24-49 (EFRIQVRDYNTKNGTIKWHSIRRQKR) are excised as a propeptide. N-linked (GlcNAc...) asparagine glycosylation is found at N36, N110, and N180. 4 consecutive Cadherin domains span residues 50–158 (EWIK…PVFS), 159–270 (MATF…PYME), 271–385 (QSSY…GPVF), and 386–497 (RPGS…TEPN). The Extracellular portion of the chain corresponds to 50-548 (EWIKFAAACR…LLSDNVHFGP (499 aa)). Residues 485–534 (SFGNDDRTNTEPNTKITTNTGRQESTSSTNYDTSTTSTDSSQVYSSEPGN) are disordered. The segment covering 494-508 (TEPNTKITTNTGRQE) has biased composition (polar residues). The segment covering 509-530 (STSSTNYDTSTTSTDSSQVYSS) has biased composition (low complexity). The helical transmembrane segment at 549–569 (AGIGLLIMGFLVLGLVPFLMI) threads the bilayer. Residues 570–1049 (CCDCGGAPRS…TKYSTVQYSK (480 aa)) are Cytoplasmic-facing. S579 is modified (phosphoserine). Desmoglein repeat repeat units follow at residues 813-839 (TYPSGPGVLHPKPILDPLGYGNVTVTE), 840-869 (SYTTSDTLKPSVHVHDNRPASNVVVTERVV), 870-899 (GPISGADLHGMLEMPDLRDGSNVIVTERVI), 900-927 (APSSSLPTSLTIHHPRESSNVVVTERVI), and 928-956 (QPTSGMIGSLSMHPELANAHNVIVTERVV). The disordered stretch occupies residues 1014–1035 (HMRSSSDHHFNQTIGSASPSTA). Over residues 1024-1035 (NQTIGSASPSTA) the composition is skewed to polar residues.

As to quaternary structure, binds to JUP/plakoglobin. Interacts with PKP2. Interacts with DSC3; there is evidence to suggest that the interaction promotes cell-cell adhesion of keratinocytes. (Microbial infection) Interacts with Staphylococcus aureus protein SdrD; this interaction increases S.aureus adherence to keratinocytes. In terms of tissue distribution, expressed in all suprabasal layers of the epidermis, with the highest expression seen in the granular layer (at protein level).

The protein localises to the cell membrane. The protein resides in the cell junction. It localises to the desmosome. Its subcellular location is the cytoplasm. It is found in the nucleus. Component of intercellular desmosome junctions. Involved in the interaction of plaque proteins and intermediate filaments mediating cell-cell adhesion. This Homo sapiens (Human) protein is Desmoglein-1 (DSG1).